Consider the following 350-residue polypeptide: Small ribosomal subunit biogenesis GTPase RsgA (350 aa).

Over residues methionine 1–asparagine 17 the composition is skewed to polar residues. The disordered stretch occupies residues methionine 1 to leucine 35. Residues threonine 103 to phenylalanine 273 enclose the CP-type G domain. GTP is bound by residues asparagine 159–aspartate 162 and glycine 213–serine 221. Positions 297, 302, 304, and 310 each coordinate Zn(2+).

The protein belongs to the TRAFAC class YlqF/YawG GTPase family. RsgA subfamily. As to quaternary structure, monomer. Associates with 30S ribosomal subunit, binds 16S rRNA. Requires Zn(2+) as cofactor.

The protein resides in the cytoplasm. Functionally, one of several proteins that assist in the late maturation steps of the functional core of the 30S ribosomal subunit. Helps release RbfA from mature subunits. May play a role in the assembly of ribosomal proteins into the subunit. Circularly permuted GTPase that catalyzes slow GTP hydrolysis, GTPase activity is stimulated by the 30S ribosomal subunit. In Yersinia enterocolitica serotype O:8 / biotype 1B (strain NCTC 13174 / 8081), this protein is Small ribosomal subunit biogenesis GTPase RsgA.